The following is a 436-amino-acid chain: 3-ketoacyl-CoA thiolase (436 aa).

Cys-99 acts as the Acyl-thioester intermediate in catalysis. Active-site proton acceptor residues include His-392 and Cys-422.

The protein belongs to the thiolase-like superfamily. Thiolase family. In terms of assembly, heterotetramer of two alpha chains (FadJ) and two beta chains (FadI).

It localises to the cytoplasm. It catalyses the reaction an acyl-CoA + acetyl-CoA = a 3-oxoacyl-CoA + CoA. It functions in the pathway lipid metabolism; fatty acid beta-oxidation. Its function is as follows. Catalyzes the final step of fatty acid oxidation in which acetyl-CoA is released and the CoA ester of a fatty acid two carbons shorter is formed. This is 3-ketoacyl-CoA thiolase from Escherichia coli (strain K12 / MC4100 / BW2952).